A 319-amino-acid polypeptide reads, in one-letter code: Probable NAD(P)H-dependent D-xylose reductase xyl1 (319 aa).

Asn-26 carries N-linked (GlcNAc...) asparagine glycosylation. The Proton donor role is filled by Tyr-50. His-112 is a substrate binding site. N-linked (GlcNAc...) asparagine glycosylation is found at Asn-141 and Asn-167. NAD(+)-binding positions include 166–167 (SN), 215–224 (SSFGPLSFLE), and 271–281 (KSNNPQRLKQN).

The protein belongs to the aldo/keto reductase family.

The enzyme catalyses xylitol + NAD(+) = D-xylose + NADH + H(+). It catalyses the reaction xylitol + NADP(+) = D-xylose + NADPH + H(+). It participates in carbohydrate metabolism; D-xylose degradation. Functionally, catalyzes the initial reaction in the xylose utilization pathway by reducing D-xylose into xylitol. Xylose is a major component of hemicelluloses such as xylan. Most fungi utilize D-xylose via three enzymatic reactions, xylose reductase (XR), xylitol dehydrogenase (XDH), and xylulokinase, to form xylulose 5-phosphate, which enters pentose phosphate pathway. This is Probable NAD(P)H-dependent D-xylose reductase xyl1 (xyl1) from Aspergillus niger (strain ATCC MYA-4892 / CBS 513.88 / FGSC A1513).